The chain runs to 464 residues: ERO1-like protein alpha (464 aa).

The N-terminal stretch at 1-23 (MGRGWGLLVGLLGVVWLLRSGQG) is a signal peptide. 8 disulfides stabilise this stretch: cysteine 35-cysteine 48, cysteine 37-cysteine 46, cysteine 85-cysteine 387, cysteine 94-cysteine 99, cysteine 94-cysteine 130, cysteine 99-cysteine 104, cysteine 207-cysteine 237, and cysteine 390-cysteine 393. 3 positions are modified to phosphoserine: serine 106, serine 142, and serine 144. FAD contacts are provided by arginine 186, threonine 188, and tryptophan 199. Serine 248 and histidine 251 together coordinate FAD. The N-linked (GlcNAc...) asparagine glycan is linked to asparagine 276. Residues arginine 283 and arginine 296 each contribute to the FAD site. The N-linked (GlcNAc...) asparagine glycan is linked to asparagine 380.

It belongs to the EROs family. As to quaternary structure, predominantly monomer. May function both as a monomer and a homodimer. Interacts with PDILT. Interacts with ERP44; the interaction results in retention of ERO1A in the endoplasmic reticulum. FAD is required as a cofactor. In terms of processing, N-glycosylated. The Cys-94/Cys-99 and Cys-390/Cys-393 disulfide bonds constitute the redox-active center. The Cys-94/Cys-99 disulfide bond may accept electron from P4HB and funnel them to the active site disulfide Cys-390/Cys-393. The regulatory Cys-99/Cys-104 disulfide bond stabilizes the other regulatory bond Cys-94/Cys-130. Post-translationally, phosphorylated on Ser-144 by FAM20C in the Golgi which increases its enzymatic activity. Phosphorylation is induced by lactation. It is also induced by hypoxia and reductive stress.

It localises to the endoplasmic reticulum membrane. The protein resides in the golgi apparatus lumen. Its subcellular location is the secreted. It is found in the cell projection. The protein localises to the dendrite. Enzyme activity is tightly regulated to prevent the accumulation of reactive oxygen species in the endoplasmic reticulum. Reversibly down-regulated by the formation of disulfide bonds between the active site Cys-94 and Cys-130, and between Cys-99 and Cys-104. Glutathione may be required to regulate its activity in the endoplasmic reticulum. Functionally, oxidoreductase involved in disulfide bond formation in the endoplasmic reticulum. Efficiently reoxidizes P4HB/PDI, the enzyme catalyzing protein disulfide formation, in order to allow P4HB to sustain additional rounds of disulfide formation. Following P4HB reoxidation, passes its electrons to molecular oxygen via FAD, leading to the production of reactive oxygen species (ROS) in the cell. Required for the proper folding of immunoglobulins. Plays an important role in ER stress-induced, CHOP-dependent apoptosis by activating the inositol 1,4,5-trisphosphate receptor IP3R1. This is ERO1-like protein alpha from Rattus norvegicus (Rat).